Reading from the N-terminus, the 307-residue chain is Quinolinate synthase (307 aa).

Iminosuccinate-binding residues include H23 and S40. Residue C86 participates in [4Fe-4S] cluster binding. Iminosuccinate-binding positions include 112–114 (YVN) and S129. Residue C173 coordinates [4Fe-4S] cluster. Residues 199–201 (HPE) and T216 each bind iminosuccinate. Residue C265 participates in [4Fe-4S] cluster binding.

The protein belongs to the quinolinate synthase family. Type 2 subfamily. [4Fe-4S] cluster is required as a cofactor.

Its subcellular location is the cytoplasm. The catalysed reaction is iminosuccinate + dihydroxyacetone phosphate = quinolinate + phosphate + 2 H2O + H(+). It participates in cofactor biosynthesis; NAD(+) biosynthesis; quinolinate from iminoaspartate: step 1/1. Catalyzes the condensation of iminoaspartate with dihydroxyacetone phosphate to form quinolinate. This Methanocaldococcus jannaschii (strain ATCC 43067 / DSM 2661 / JAL-1 / JCM 10045 / NBRC 100440) (Methanococcus jannaschii) protein is Quinolinate synthase.